Reading from the N-terminus, the 334-residue chain is YbbR-like domain-containing protein BB_0009 (334 aa).

Residues 22-38 (AISILIAILMFVAFNFN) form a helical membrane-spanning segment. YbbR-like domains lie at 43-128 (ITTE…NVLL) and 138-220 (VKIE…VVNI).

The protein resides in the membrane. This is YbbR-like domain-containing protein BB_0009 from Borreliella burgdorferi (strain ATCC 35210 / DSM 4680 / CIP 102532 / B31) (Borrelia burgdorferi).